Reading from the N-terminus, the 279-residue chain is B3 domain-containing protein Os05g0481400 (279 aa).

Residues 45 to 68 (ARLQKSTRASPKPRKKFEVGATEV) are disordered. The TF-B3 DNA-binding region spans 139 to 230 (FVKTMVRSHV…RFKIYIIKAV (92 aa)). Acidic residues-rich tracts occupy residues 233–244 (DANESEPADEEA) and 252–262 (TEDAAEQDDSP). Residues 233-279 (DANESEPADEEAIGDKDTSTEDAAEQDDSPNAEPLKGTKRRKLRGRR) form a disordered region. Basic residues predominate over residues 269 to 279 (GTKRRKLRGRR).

Its subcellular location is the nucleus. This is B3 domain-containing protein Os05g0481400 from Oryza sativa subsp. japonica (Rice).